Consider the following 36-residue polypeptide: Glucagon-2 (36 aa).

It belongs to the glucagon family.

It localises to the secreted. Its function is as follows. Glucagon plays a key role in glucose metabolism and homeostasis. Regulates blood glucose by increasing gluconeogenesis and decreasing glycolysis. In Huso dauricus (Kaluga sturgeon), this protein is Glucagon-2.